Here is a 345-residue protein sequence, read N- to C-terminus: MKIAVDAMGGDYAPDEIVKGIELARDAYPDLEFLLYGQTAKVQPLLQNTTRIELVDAPEVIAMEDEPVRAVRRKKQSSIVLAATAVREGQADAFFSAGNTGAVLAAGLLIIGRIKGIERPGLTTTLPVLQRPDQSSFVMLDVGANADTKPFNVVQYAIMGQYYAQSVMHVDNPRIGLLNNGTEADKGDMAHRAIHDALANMAEINFVGNVESRELLNGAADVVVTDGFTGNATLKAVEGTALSMLKLIKGEIMSGGLGGKIGASMLKPVFRQVRSAMDYSQYGGAVLLGLKAPVVKTHGSTKAETVKNTIGQIQELLASHSADQLGTYFAEHSDEMAALKENLKA.

It belongs to the PlsX family. In terms of assembly, homodimer. Probably interacts with PlsY.

It localises to the cytoplasm. The enzyme catalyses a fatty acyl-[ACP] + phosphate = an acyl phosphate + holo-[ACP]. The protein operates within lipid metabolism; phospholipid metabolism. Functionally, catalyzes the reversible formation of acyl-phosphate (acyl-PO(4)) from acyl-[acyl-carrier-protein] (acyl-ACP). This enzyme utilizes acyl-ACP as fatty acyl donor, but not acyl-CoA. The sequence is that of Phosphate acyltransferase from Levilactobacillus brevis (strain ATCC 367 / BCRC 12310 / CIP 105137 / JCM 1170 / LMG 11437 / NCIMB 947 / NCTC 947) (Lactobacillus brevis).